Reading from the N-terminus, the 82-residue chain is Acyl carrier protein (82 aa).

Residues 3-81 (SSEQEILAGL…DAVTYIAGAQ (79 aa)) form the Carrier domain. Ser-41 carries the post-translational modification O-(pantetheine 4'-phosphoryl)serine.

It belongs to the acyl carrier protein (ACP) family. 4'-phosphopantetheine is transferred from CoA to a specific serine of apo-ACP by AcpS. This modification is essential for activity because fatty acids are bound in thioester linkage to the sulfhydryl of the prosthetic group.

Its subcellular location is the cytoplasm. The protein operates within lipid metabolism; fatty acid biosynthesis. Functionally, carrier of the growing fatty acid chain in fatty acid biosynthesis. This Beutenbergia cavernae (strain ATCC BAA-8 / DSM 12333 / CCUG 43141 / JCM 11478 / NBRC 16432 / NCIMB 13614 / HKI 0122) protein is Acyl carrier protein.